We begin with the raw amino-acid sequence, 157 residues long: 6,7-dimethyl-8-ribityllumazine synthase 2 (157 aa).

5-amino-6-(D-ribitylamino)uracil is bound by residues Trp-21, 55–57 (AYE), and 79–81 (FVV). The active-site Proton donor is the Arg-87. Ser-112 provides a ligand contact to 5-amino-6-(D-ribitylamino)uracil. His-126 lines the (2S)-2-hydroxy-3-oxobutyl phosphate pocket.

Belongs to the DMRL synthase family. In terms of assembly, homodecamer, arranged as a dimer of pentamers.

The catalysed reaction is (2S)-2-hydroxy-3-oxobutyl phosphate + 5-amino-6-(D-ribitylamino)uracil = 6,7-dimethyl-8-(1-D-ribityl)lumazine + phosphate + 2 H2O + H(+). Its pathway is cofactor biosynthesis; riboflavin biosynthesis; riboflavin from 2-hydroxy-3-oxobutyl phosphate and 5-amino-6-(D-ribitylamino)uracil: step 1/2. Its function is as follows. Catalyzes the formation of 6,7-dimethyl-8-ribityllumazine by condensation of 5-amino-6-(D-ribitylamino)uracil with 3,4-dihydroxy-2-butanone 4-phosphate. This is the penultimate step in the biosynthesis of riboflavin. In Mesorhizobium japonicum (strain LMG 29417 / CECT 9101 / MAFF 303099) (Mesorhizobium loti (strain MAFF 303099)), this protein is 6,7-dimethyl-8-ribityllumazine synthase 2 (ribH2).